Here is a 627-residue protein sequence, read N- to C-terminus: Carene synthase 3, chloroplastic (627 aa).

A chloroplast-targeting transit peptide spans 1–36 (MSVISIVPLASKSCLYKSLMSSTHELKALCRPIATL). 3 residues coordinate Mg(2+): Asp378, Asp382, and Asp530. A DDXXD motif motif is present at residues 378-382 (DDMYD).

This sequence belongs to the terpene synthase family. Tpsd subfamily. Mg(2+) serves as cofactor. Requires Mn(2+) as cofactor.

Its subcellular location is the plastid. The protein resides in the chloroplast. The catalysed reaction is (2E)-geranyl diphosphate = (+)-car-3-ene + diphosphate. Its pathway is terpene metabolism; oleoresin biosynthesis. In terms of biological role, terpene synthase (TPS) involved in defensive oleoresin formation in conifers in response to insect attack or other injury. In Picea sitchensis (Sitka spruce), this protein is Carene synthase 3, chloroplastic (TPS-3car3).